We begin with the raw amino-acid sequence, 287 residues long: ATP synthase gamma chain (287 aa).

Belongs to the ATPase gamma chain family. In terms of assembly, F-type ATPases have 2 components, CF(1) - the catalytic core - and CF(0) - the membrane proton channel. CF(1) has five subunits: alpha(3), beta(3), gamma(1), delta(1), epsilon(1). CF(0) has three main subunits: a, b and c.

The protein resides in the cell inner membrane. Functionally, produces ATP from ADP in the presence of a proton gradient across the membrane. The gamma chain is believed to be important in regulating ATPase activity and the flow of protons through the CF(0) complex. In Proteus mirabilis (strain HI4320), this protein is ATP synthase gamma chain.